We begin with the raw amino-acid sequence, 144 residues long: MKLNDLSPAPGSRREKHRPGRGIGSGLGKTGGRGHKGQTSRSGGSIAPGFEGGQQPLHRRLPKFGFVSLKAMDRAEVRLSELAKVEGDLITVQSLKDANVIGQHVQRVKIMLSGEVTRAVTLKGIAVTKGARAAIEAAGGKFEE.

The interval 1–57 (MKLNDLSPAPGSRREKHRPGRGIGSGLGKTGGRGHKGQTSRSGGSIAPGFEGGQQPL) is disordered. Residues 21 to 31 (RGIGSGLGKTG) show a composition bias toward gly residues.

It belongs to the universal ribosomal protein uL15 family. In terms of assembly, part of the 50S ribosomal subunit.

Binds to the 23S rRNA. The chain is Large ribosomal subunit protein uL15 from Pseudomonas entomophila (strain L48).